We begin with the raw amino-acid sequence, 98 residues long: Putative septation protein SpoVG (98 aa).

Belongs to the SpoVG family.

Essential for sporulation. Interferes with or is a negative regulator of the pathway leading to asymmetric septation. The protein is Putative septation protein SpoVG of Shouchella clausii (strain KSM-K16) (Alkalihalobacillus clausii).